The sequence spans 940 residues: Gamma-aminobutyric acid type B receptor subunit 2 (940 aa).

Residues 1 to 40 (MASPPSSGQPRPPPPPPPPARLLLPLLLSLLLWLAPGAWG) form the signal peptide. Residues 41–482 (WTRGAPRPPP…LRKISLPLYS (442 aa)) lie on the Extracellular side of the membrane. Asn-89 is a glycosylation site (N-linked (GlcNAc...) asparagine). 3 disulfides stabilise this stretch: Cys-107/Cys-134, Cys-236/Cys-265, and Cys-264/Cys-301. N-linked (GlcNAc...) asparagine glycosylation is found at Asn-297, Asn-388, Asn-403, and Asn-452. The chain crosses the membrane as a helical span at residues 483 to 503 (ILSALTILGMIMASAFLFFNI). The Cytoplasmic portion of the chain corresponds to 504 to 521 (KNRNQKLIKMSSPYMNNL). Residues 522 to 542 (IILGGMLSYASIFLFGLDGSF) traverse the membrane as a helical segment. Residues 543–550 (VSEKTFET) lie on the Extracellular side of the membrane. The helical transmembrane segment at 551–571 (LCTVRTWILTVGYTTAFGAMF) threads the bilayer. Residues 572–596 (AKTWRVHAIFKNVKMKKKIIKDQKL) are Cytoplasmic-facing. Residues 597–617 (LVIVGGMLLIDLCILICWQAV) traverse the membrane as a helical segment. The Extracellular segment spans residues 618-653 (DPLRRTVERYSMEPDPAGRDISIRPLLEHCENTHMT). Residues 654-674 (IWLGIVYAYKGLLMLFGCFLA) form a helical membrane-spanning segment. The Cytoplasmic portion of the chain corresponds to 675-690 (WETRNVSIPALNDSKY). Residues 691 to 711 (IGMSVYNVGIMCIIGAAVSFL) traverse the membrane as a helical segment. At 712–719 (TRDQPNVQ) the chain is on the extracellular side. A helical membrane pass occupies residues 720 to 740 (FCIVALVIIFCSTITLCLVFV). Over 741–940 (PKLITLRTNP…PSFRVMVSGL (200 aa)) the chain is Cytoplasmic. Positions 762 to 789 (TQNQKKEDSKTSTSVTSVNQASTSRLEG) are disordered. Positions 772-786 (TSTSVTSVNQASTSR) are enriched in polar residues. A phosphoserine mark is found at Ser-775 and Ser-778. The stretch at 780–818 (NQASTSRLEGLQSENHRLRMKITELDKDLEEVTMQLQDT) forms a coiled coil. Thr-818 carries the phosphothreonine modification. A phosphoserine mark is found at Ser-883, Ser-892, Ser-912, Ser-915, Ser-919, and Ser-923.

The protein belongs to the G-protein coupled receptor 3 family. GABA-B receptor subfamily. As to quaternary structure, heterodimer of GABBR1 and GABBR2. Homodimers may form, but are inactive. Interacts (via C-terminus) with ATF4 (via leucine zipper domain). Interacts with KCTD8, KCTD12 and KCTD16; this interaction determines the pharmacology and kinetics of the receptor response, the KCTD proteins markedly accelerating the GABA-B response, although to different extents. In terms of tissue distribution, highly expressed in areas of the brain including thalamic nuclei, the hippocampus, cerebellar Purkinje cells and the medial habenula, and moderately expressed in the cerebral cortex, certain anterioventral thalamic nuclei, dorsal medial hypothalamic nucleus and suprachiasmatic nuclei. Also weakly expressed in the testis.

The protein resides in the cell membrane. Its subcellular location is the postsynaptic cell membrane. The protein localises to the perikaryon. It localises to the cell projection. It is found in the dendrite. Its function is as follows. Component of a heterodimeric G-protein coupled receptor for GABA, formed by GABBR1 and GABBR2. Within the heterodimeric GABA receptor, only GABBR1 seems to bind agonists, while GABBR2 mediates coupling to G proteins. Ligand binding causes a conformation change that triggers signaling via guanine nucleotide-binding proteins (G proteins) and modulates the activity of down-stream effectors, such as adenylate cyclase. Signaling inhibits adenylate cyclase, stimulates phospholipase A2, activates potassium channels, inactivates voltage-dependent calcium-channels and modulates inositol phospholipid hydrolysis. Plays a critical role in the fine-tuning of inhibitory synaptic transmission. Pre-synaptic GABA receptor inhibits neurotransmitter release by down-regulating high-voltage activated calcium channels, whereas postsynaptic GABA receptor decreases neuronal excitability by activating a prominent inwardly rectifying potassium (Kir) conductance that underlies the late inhibitory postsynaptic potentials. Not only implicated in synaptic inhibition but also in hippocampal long-term potentiation, slow wave sleep, muscle relaxation and antinociception. The protein is Gamma-aminobutyric acid type B receptor subunit 2 (Gabbr2) of Rattus norvegicus (Rat).